The chain runs to 459 residues: Cyclin-dependent kinase F-4 (459 aa).

Residues 4-283 (FKMIKEVGDG…AAEVLQHTFF (280 aa)) form the Protein kinase domain. ATP contacts are provided by residues 10–18 (VGDGTFGSV) and lysine 33. Aspartate 125 (proton acceptor) is an active-site residue. Residue serine 151 is modified to Phosphoserine. Threonine 156 bears the Phosphothreonine mark. The segment at 310–397 (KGVSEHGMPR…RHSRSLPETG (88 aa)) is disordered. 2 stretches are compositionally biased toward polar residues: residues 322–346 (STGT…SKTG) and 366–375 (ESNNKLTTNR).

The protein belongs to the protein kinase superfamily. CMGC Ser/Thr protein kinase family. CDC2/CDKX subfamily.

The catalysed reaction is L-seryl-[protein] + ATP = O-phospho-L-seryl-[protein] + ADP + H(+). It catalyses the reaction L-threonyl-[protein] + ATP = O-phospho-L-threonyl-[protein] + ADP + H(+). The enzyme catalyses [DNA-directed RNA polymerase] + ATP = phospho-[DNA-directed RNA polymerase] + ADP + H(+). This chain is Cyclin-dependent kinase F-4 (CDKF-4), found in Oryza sativa subsp. japonica (Rice).